A 200-amino-acid polypeptide reads, in one-letter code: Probable GTP-binding protein EngB (200 aa).

An EngB-type G domain is found at 22 to 195 (GKDEIAFVGR…INNICSGINY (174 aa)). Residues 30 to 37 (GRSNVGKS), 57 to 61 (GKTRL), 75 to 78 (DLPG), 142 to 145 (TKSD), and 174 to 176 (FSS) each bind GTP. Mg(2+)-binding residues include Ser37 and Thr59.

The protein belongs to the TRAFAC class TrmE-Era-EngA-EngB-Septin-like GTPase superfamily. EngB GTPase family. Mg(2+) is required as a cofactor.

Functionally, necessary for normal cell division and for the maintenance of normal septation. The polypeptide is Probable GTP-binding protein EngB (Clostridium acetobutylicum (strain ATCC 824 / DSM 792 / JCM 1419 / IAM 19013 / LMG 5710 / NBRC 13948 / NRRL B-527 / VKM B-1787 / 2291 / W)).